The chain runs to 274 residues: 3-methyl-2-oxobutanoate hydroxymethyltransferase (274 aa).

D49 and D88 together coordinate Mg(2+). 3-methyl-2-oxobutanoate contacts are provided by residues D49–S50, D88, and K118. E120 is a Mg(2+) binding site. E187 acts as the Proton acceptor in catalysis.

Belongs to the PanB family. Homodecamer; pentamer of dimers. It depends on Mg(2+) as a cofactor.

Its subcellular location is the cytoplasm. The catalysed reaction is 3-methyl-2-oxobutanoate + (6R)-5,10-methylene-5,6,7,8-tetrahydrofolate + H2O = 2-dehydropantoate + (6S)-5,6,7,8-tetrahydrofolate. The protein operates within cofactor biosynthesis; (R)-pantothenate biosynthesis; (R)-pantoate from 3-methyl-2-oxobutanoate: step 1/2. Its function is as follows. Catalyzes the reversible reaction in which hydroxymethyl group from 5,10-methylenetetrahydrofolate is transferred onto alpha-ketoisovalerate to form ketopantoate. The protein is 3-methyl-2-oxobutanoate hydroxymethyltransferase of Rhodopseudomonas palustris (strain BisB5).